We begin with the raw amino-acid sequence, 464 residues long: Asparagine--tRNA ligase (464 aa).

The protein belongs to the class-II aminoacyl-tRNA synthetase family. Homodimer.

Its subcellular location is the cytoplasm. It carries out the reaction tRNA(Asn) + L-asparagine + ATP = L-asparaginyl-tRNA(Asn) + AMP + diphosphate + H(+). This chain is Asparagine--tRNA ligase, found in Acetivibrio thermocellus (strain ATCC 27405 / DSM 1237 / JCM 9322 / NBRC 103400 / NCIMB 10682 / NRRL B-4536 / VPI 7372) (Clostridium thermocellum).